We begin with the raw amino-acid sequence, 75 residues long: ATP synthase subunit c (75 aa).

Helical transmembrane passes span 4 to 24 (GLIA…GLGQ) and 54 to 74 (AVAE…MFAF).

This sequence belongs to the ATPase C chain family. F-type ATPases have 2 components, F(1) - the catalytic core - and F(0) - the membrane proton channel. F(1) has five subunits: alpha(3), beta(3), gamma(1), delta(1), epsilon(1). F(0) has three main subunits: a(1), b(2) and c(10-14). The alpha and beta chains form an alternating ring which encloses part of the gamma chain. F(1) is attached to F(0) by a central stalk formed by the gamma and epsilon chains, while a peripheral stalk is formed by the delta and b chains.

The protein resides in the cell membrane. F(1)F(0) ATP synthase produces ATP from ADP in the presence of a proton or sodium gradient. F-type ATPases consist of two structural domains, F(1) containing the extramembraneous catalytic core and F(0) containing the membrane proton channel, linked together by a central stalk and a peripheral stalk. During catalysis, ATP synthesis in the catalytic domain of F(1) is coupled via a rotary mechanism of the central stalk subunits to proton translocation. In terms of biological role, key component of the F(0) channel; it plays a direct role in translocation across the membrane. A homomeric c-ring of between 10-14 subunits forms the central stalk rotor element with the F(1) delta and epsilon subunits. The polypeptide is ATP synthase subunit c (Mycoplasmopsis agalactiae (strain NCTC 10123 / CIP 59.7 / PG2) (Mycoplasma agalactiae)).